A 215-amino-acid chain; its full sequence is N-(5'-phosphoribosyl)anthranilate isomerase (215 aa).

It belongs to the TrpF family.

It catalyses the reaction N-(5-phospho-beta-D-ribosyl)anthranilate = 1-(2-carboxyphenylamino)-1-deoxy-D-ribulose 5-phosphate. It functions in the pathway amino-acid biosynthesis; L-tryptophan biosynthesis; L-tryptophan from chorismate: step 3/5. The chain is N-(5'-phosphoribosyl)anthranilate isomerase from Rippkaea orientalis (strain PCC 8801 / RF-1) (Cyanothece sp. (strain PCC 8801)).